Reading from the N-terminus, the 81-residue chain is U-poneritoxin(01)-Om2a (81 aa).

Positions 1-25 are cleaved as a signal peptide; the sequence is MKPSGITFAFLVVFMMAIMYNSVQA. Residues 26-47 constitute a propeptide that is removed on maturation; the sequence is AAIADADADAEAKAFADAFAEA.

The protein belongs to the formicidae venom precursor-01 superfamily. Post-translationally, truncated sequences of this peptide have also been found in the venom. It is possible they have been cleaved in the venom. As to expression, expressed by the venom gland.

It is found in the secreted. Functionally, cationic amphipathic alpha-helical peptide with antimicrobial activities against E.coli (MIC=6.2 uM), S.aureus (MIC=6.2 uM), and S.cerevisiae (MIC=50 uM). Also shows histamine-releasing activity (30.1% at 10 uM) and a weak hemolytic activity (10.4% at 50 uM). The chain is U-poneritoxin(01)-Om2a from Odontomachus monticola (Trap-jaw ant).